A 322-amino-acid chain; its full sequence is Alanine dehydrogenase (322 aa).

Residue lysine 65 is the Proton donor/acceptor of the active site. NAD(+) is bound by residues arginine 108, 135–136 (TQ), 157–159 (DVR), 217–219 (GAD), lysine 223, and serine 290.

This sequence belongs to the ornithine cyclodeaminase/mu-crystallin family. Archaeal alanine dehydrogenase subfamily. In terms of assembly, homodimer.

It catalyses the reaction L-alanine + NAD(+) + H2O = pyruvate + NH4(+) + NADH + H(+). Catalyzes the NAD(+)-dependent oxidative deamination of L-alanine to pyruvate, and the reverse reaction, the reductive amination of pyruvate. Its physiological role is not known. Cannot use NADP(+) instead of NAD(+) as a cosubstrate. In the deamination direction, can also efficiently use L-2-aminobutyrate as substrate. In the reductive amination direction, also exhibits high activity with 2-oxobutyrate and oxaloacetate as substrate. In contrast to bacterial homologs, does not exhibit any ornithine cyclodeaminase activity. The sequence is that of Alanine dehydrogenase from Archaeoglobus fulgidus (strain ATCC 49558 / DSM 4304 / JCM 9628 / NBRC 100126 / VC-16).